The following is a 1083-amino-acid chain: Ubiquitin carboxyl-terminal hydrolase 1 (1083 aa).

Residues R30 to K165 form a UBP-type zinc finger. 12 residues coordinate Zn(2+): C32, H34, C56, C59, C95, C98, C103, H115, H119, H125, C139, and C142. Residues R202–I1083 form the USP domain. Catalysis depends on C211, which acts as the Nucleophile. Disordered stretches follow at residues K387–T424 and G450–I486. 2 stretches are compositionally biased toward basic and acidic residues: residues S409 to T419 and L455 to R473. Polar residues predominate over residues A474–G485. H1029 serves as the catalytic Proton acceptor.

This sequence belongs to the peptidase C19 family.

It catalyses the reaction Thiol-dependent hydrolysis of ester, thioester, amide, peptide and isopeptide bonds formed by the C-terminal Gly of ubiquitin (a 76-residue protein attached to proteins as an intracellular targeting signal).. Recognizes and hydrolyzes the peptide bond at the C-terminal Gly of ubiquitin. Involved in the processing of poly-ubiquitin precursors as well as that of ubiquitinated proteins. Is involved in resistance to the arginine analog canavanine (CAN). In Arabidopsis thaliana (Mouse-ear cress), this protein is Ubiquitin carboxyl-terminal hydrolase 1 (UBP1).